The chain runs to 101 residues: MSSTLIVQLDMRTLCQEADVSADWVIEIVEHGIVEPSGRTPEEWVFDDRAPVTLKRAVKLHQELELEWEGVALALELLEEVQQLRSENSMLKQRLGRFTQM.

The protein belongs to the CbpM family.

Functionally, interacts with CbpA and inhibits both the DnaJ-like co-chaperone activity and the DNA binding activity of CbpA. Together with CbpA, modulates the activity of the DnaK chaperone system. Does not inhibit the co-chaperone activity of DnaJ. This Pseudomonas entomophila (strain L48) protein is Chaperone modulatory protein CbpM.